We begin with the raw amino-acid sequence, 73 residues long: Putative antitoxin VapB18 (73 aa).

This sequence belongs to the UPF0330 family.

Its function is as follows. Possibly the antitoxin component of a type II toxin-antitoxin (TA) system. Its cognate toxin is VapC18 (Potential). The polypeptide is Putative antitoxin VapB18 (vapB18) (Archaeoglobus fulgidus (strain ATCC 49558 / DSM 4304 / JCM 9628 / NBRC 100126 / VC-16)).